Here is a 685-residue protein sequence, read N- to C-terminus: Galactocerebrosidase (685 aa).

The first 42 residues, 1-42, serve as a signal peptide directing secretion; sequence MAEWLLSASWQRRAKAMTAAAGSAGRAAVPLLLCALLAPGGA. T109 lines the substrate pocket. N-linked (GlcNAc...) asparagine glycosylation is present at N143. Substrate is bound by residues W151 and N197. The active-site Proton donor/acceptor is the E198. The active-site Nucleophile is E274. Cysteines 287 and 394 form a disulfide. N379 carries N-linked (GlcNAc...) asparagine glycosylation. R396 is a binding site for substrate. Residues N403, N556, N559, and N602 are each glycosylated (N-linked (GlcNAc...) asparagine).

Belongs to the glycosyl hydrolase 59 family. As to expression, detected in urine. Detected in testis, brain and placenta (at protein level). Detected in kidney and liver.

It localises to the lysosome. It carries out the reaction a beta-D-galactosyl-(1&lt;-&gt;1')-N-acylsphing-4-enine + H2O = an N-acylsphing-4-enine + D-galactose. It catalyses the reaction beta-D-galactosyl-(1&lt;-&gt;1)-sphing-4-enine + H2O = sphing-4-enine + D-galactose. The enzyme catalyses a D-galactosylceramide + H2O = an N-acyl-sphingoid base + D-galactose. Its function is as follows. Hydrolyzes the galactose ester bonds of glycolipids such as galactosylceramide and galactosylsphingosine. Enzyme with very low activity responsible for the lysosomal catabolism of galactosylceramide, a major lipid in myelin, kidney and epithelial cells of small intestine and colon. The polypeptide is Galactocerebrosidase (Homo sapiens (Human)).